The chain runs to 276 residues: Large ribosomal subunit protein uL2 (276 aa).

A disordered region spans residues 211–276 (RNRHRGIRPQ…KLIISRRKGK (66 aa)). Over residues 230–240 (DHPHGGGEGKK) the composition is skewed to basic and acidic residues.

The protein belongs to the universal ribosomal protein uL2 family. Part of the 50S ribosomal subunit. Forms a bridge to the 30S subunit in the 70S ribosome.

One of the primary rRNA binding proteins. Required for association of the 30S and 50S subunits to form the 70S ribosome, for tRNA binding and peptide bond formation. It has been suggested to have peptidyltransferase activity; this is somewhat controversial. Makes several contacts with the 16S rRNA in the 70S ribosome. The sequence is that of Large ribosomal subunit protein uL2 from Campylobacter jejuni subsp. doylei (strain ATCC BAA-1458 / RM4099 / 269.97).